The following is a 151-amino-acid chain: UPF0561 protein C2orf68 homolog (151 aa).

The interval 1 to 89 (MEEEGEAQGR…TLKDEPNDNG (89 aa)) is disordered. Basic and acidic residues-rich tracts occupy residues 32–46 (LARD…QAKE) and 70–85 (RQRE…KDEP).

Belongs to the UPF0561 family.

The sequence is that of UPF0561 protein C2orf68 homolog from Xenopus laevis (African clawed frog).